A 196-amino-acid chain; its full sequence is Protein LIGHT-DEPENDENT SHORT HYPOCOTYLS 6 (196 aa).

Residues 1-16 are compositionally biased toward basic and acidic residues; that stretch reads MESADSGRSDPVKGDD. 2 disordered regions span residues 1–36 and 149–196; these read MESADSGRSDPVKGDDPGPSFVSSPPATPSRYESQK and ARGI…AVPP. Residues 31-158 enclose the ALOG domain; sequence RYESQKRRDW…ARGIPYEKKK (128 aa). The Nuclear localization signal signature appears at 156 to 160; it reads KKKRK.

This sequence belongs to the plant homeotic and developmental regulators ALOG protein family.

The protein localises to the nucleus. Probable transcription regulator that acts as a developmental regulator by promoting cell growth in response to light. This chain is Protein LIGHT-DEPENDENT SHORT HYPOCOTYLS 6 (LSH6), found in Arabidopsis thaliana (Mouse-ear cress).